Consider the following 567-residue polypeptide: Delta(24)-sterol reductase (567 aa).

Residues 1-24 lie on the Lumenal side of the membrane; that stretch reads MSDLEAPLRPKRKKIWVDYFVKFR. The chain crosses the membrane as a helical; Signal-anchor span at residues 25 to 45; sequence WILVIFVVLPISFTLYFLTYL. The region spanning 45–231 is the FAD-binding PCMH-type domain; the sequence is LGDVRSEWKS…VAAEVKLIPI (187 aa). The Cytoplasmic segment spans residues 46-567; the sequence is GDVRSEWKSF…AYPEVDQPPD (522 aa). The tract at residues 520-541 is interaction with calmodulin; the sequence is CRRKYGAVGTFMSVYYKCKKGR. Positions 548–567 are disordered; that stretch reads REAEQAHLDTAYPEVDQPPD.

The protein belongs to the DIMINUTO family. As to expression, highly expressed in the apical region and root tips and lower levels in immature and mature internodes and leaves.

The protein resides in the membrane. It carries out the reaction lathosterol + NADP(+) = 5alpha-cholesta-7,24-dien-3beta-ol + NADPH + H(+). Functionally, plays a critical role in the general process of plant cell elongation. The protein is Delta(24)-sterol reductase (DIM) of Pisum sativum (Garden pea).